The following is a 177-amino-acid chain: MSNARNKRNNKNEEQGLEAGLLDRVVKIKRCAAVVKGGRRFSFAAMVVVGNGSGQVGWGYGKANEVPPSVQKAQKQASRSMIHVPLVEGSIPHQVWGRYGAARVVLIPAGAGTGIIAGQAVRAVCEACGIHDILTKSYGTNNPVTLVKATLDAMSKLRTREQIAALRGLNPDDLIEA.

The 64-residue stretch at 21–84 folds into the S5 DRBM domain; it reads LLDRVVKIKR…KQASRSMIHV (64 aa).

Belongs to the universal ribosomal protein uS5 family. In terms of assembly, part of the 30S ribosomal subunit. Contacts proteins S4 and S8.

Functionally, with S4 and S12 plays an important role in translational accuracy. In terms of biological role, located at the back of the 30S subunit body where it stabilizes the conformation of the head with respect to the body. This Rhodopirellula baltica (strain DSM 10527 / NCIMB 13988 / SH1) protein is Small ribosomal subunit protein uS5.